A 689-amino-acid chain; its full sequence is Glycine--tRNA ligase beta subunit (689 aa).

Belongs to the class-II aminoacyl-tRNA synthetase family. As to quaternary structure, tetramer of two alpha and two beta subunits.

The protein localises to the cytoplasm. It carries out the reaction tRNA(Gly) + glycine + ATP = glycyl-tRNA(Gly) + AMP + diphosphate. This Desulforapulum autotrophicum (strain ATCC 43914 / DSM 3382 / VKM B-1955 / HRM2) (Desulfobacterium autotrophicum) protein is Glycine--tRNA ligase beta subunit.